Consider the following 211-residue polypeptide: uncharacterized protein (211 aa).

The interval 187–211 (LKVSEQENSEAPVSEPKEDEKTKKD) is disordered. The segment covering 201–211 (EPKEDEKTKKD) has biased composition (basic and acidic residues).

This is an uncharacterized protein from Spiroplasma citri.